Here is a 213-residue protein sequence, read N- to C-terminus: Protein RCR1 (213 aa).

Residues 1–39 (MGLISYENEAINEVKKADNHHVSKFVTSYYGPSSSSWQS) are Lumenal-facing. Residues 40-62 (GIWILFVLFVAAVILIILFTFVA) form a helical membrane-spanning segment. Residues 63-213 (NRRRRRMGRA…PERAKVNARS (151 aa)) are Cytoplasmic-facing. The PY motif motif lies at 104-107 (VPEY). The disordered stretch occupies residues 190–213 (ERLPGGTTTQEINPPERAKVNARS). Residues 203–213 (PPERAKVNARS) show a composition bias toward basic and acidic residues.

Interacts with PMT4 and WW domain of RSP5.

It localises to the endoplasmic reticulum membrane. Its function is as follows. Regulates chitin deposition in the cell wall. The protein is Protein RCR1 (RCR1) of Saccharomyces cerevisiae (strain ATCC 204508 / S288c) (Baker's yeast).